A 255-amino-acid polypeptide reads, in one-letter code: Probable transcriptional regulator ycf27 (255 aa).

One can recognise a Response regulatory domain in the interval 9 to 122 (KILIADDESS…ELEARIRCVL (114 aa)). 4-aspartylphosphate is present on D58. The segment at residues 78–96 (DIPIIMLTALGDVTDRITG) is a DNA-binding region (H-T-H motif). The segment at residues 137–238 (SGIINIGFLK…SRGTGYLFQR (102 aa)) is a DNA-binding region (ompR/PhoB-type).

Its subcellular location is the plastid. It is found in the chloroplast. Probable promoter-specific protein mediating the interaction between DNA and RNA polymerase. The sequence is that of Probable transcriptional regulator ycf27 (ycf27) from Galdieria sulphuraria (Red alga).